A 174-amino-acid chain; its full sequence is Ribosome maturation factor RimM (174 aa).

Residues 97 to 173 (GNKFYFHEVI…DLPVGLVEMY (77 aa)) form the PRC barrel domain.

Belongs to the RimM family. Binds ribosomal protein uS19.

The protein resides in the cytoplasm. Functionally, an accessory protein needed during the final step in the assembly of 30S ribosomal subunit, possibly for assembly of the head region. Essential for efficient processing of 16S rRNA. May be needed both before and after RbfA during the maturation of 16S rRNA. It has affinity for free ribosomal 30S subunits but not for 70S ribosomes. The chain is Ribosome maturation factor RimM from Flavobacterium johnsoniae (strain ATCC 17061 / DSM 2064 / JCM 8514 / BCRC 14874 / CCUG 350202 / NBRC 14942 / NCIMB 11054 / UW101) (Cytophaga johnsonae).